A 314-amino-acid polypeptide reads, in one-letter code: Methionyl-tRNA formyltransferase (314 aa).

Position 113–116 (113–116 (SLLP)) interacts with (6S)-5,6,7,8-tetrahydrofolate.

Belongs to the Fmt family.

It carries out the reaction L-methionyl-tRNA(fMet) + (6R)-10-formyltetrahydrofolate = N-formyl-L-methionyl-tRNA(fMet) + (6S)-5,6,7,8-tetrahydrofolate + H(+). Its function is as follows. Attaches a formyl group to the free amino group of methionyl-tRNA(fMet). The formyl group appears to play a dual role in the initiator identity of N-formylmethionyl-tRNA by promoting its recognition by IF2 and preventing the misappropriation of this tRNA by the elongation apparatus. This Pseudomonas aeruginosa (strain LESB58) protein is Methionyl-tRNA formyltransferase.